The chain runs to 362 residues: Putative G-protein coupled receptor B0244.5 (362 aa).

Residues 1-47 (MQNIFENCSYHSKYEPYFLNCTNTTNQCVLIQDVGIIQAIDFWANLC) are Extracellular-facing. Asn-7, Asn-20, and Asn-23 each carry an N-linked (GlcNAc...) asparagine glycan. The helical transmembrane segment at 48–68 (IPFTLFVIAFILNGYYLSILI) threads the bilayer. The Cytoplasmic portion of the chain corresponds to 69-81 (PEFRKMNDTTKKQ). Residues 82–102 (YIFVVSRGISSLSASSIMMVL) traverse the membrane as a helical segment. At 103–125 (RLLKMLSTSFTVYFLFFLIDDLS) the chain is on the extracellular side. The chain crosses the membrane as a helical span at residues 126–145 (FYSLLGSYVGSTLLLYLATV). The Cytoplasmic segment spans residues 146 to 161 (RPIFYSIQISVRIVYK). Residues 162 to 182 (FALVNVLLAVVLAVTTAIFQA) traverse the membrane as a helical segment. The Extracellular segment spans residues 183–204 (AEVSDGFFHCDVQHCQPIINIA). Residues 205 to 225 (MFVIIATSFLIPIITLTFVLV) traverse the membrane as a helical segment. Topologically, residues 226 to 255 (TLCFQKSRTQSIGNFTVDNSVYKSARTRLA) are cytoplasmic. Residues 256–276 (WTLFTFTLISLTEMIPSSFLV) form a helical membrane-spanning segment. The Extracellular segment spans residues 277-295 (NLRVEDTITICVNFYQADH). Residues 296–316 (LFIPAIMNSFQTLAWGIALIV) form a helical membrane-spanning segment. Topologically, residues 317-362 (DPLCALLFDPRIRKVWVEHVSRLSIIIGRSFEACCHSNLNKEIQDK) are cytoplasmic.

The protein belongs to the G-protein coupled receptor 1 family. B0244 subfamily.

It is found in the cell membrane. This Caenorhabditis elegans protein is Putative G-protein coupled receptor B0244.5.